Here is a 211-residue protein sequence, read N- to C-terminus: Histidine biosynthesis bifunctional protein HisIE (211 aa).

The interval 1–107 (MNKLIDFSKG…FNSEIESRFK (107 aa)) is phosphoribosyl-AMP cyclohydrolase. The phosphoribosyl-ATP pyrophosphohydrolase stretch occupies residues 108-211 (IQALAQTIHQ…KGERKKVQEW (104 aa)).

The protein in the N-terminal section; belongs to the PRA-CH family. This sequence in the C-terminal section; belongs to the PRA-PH family.

The protein localises to the cytoplasm. It catalyses the reaction 1-(5-phospho-beta-D-ribosyl)-ATP + H2O = 1-(5-phospho-beta-D-ribosyl)-5'-AMP + diphosphate + H(+). It carries out the reaction 1-(5-phospho-beta-D-ribosyl)-5'-AMP + H2O = 1-(5-phospho-beta-D-ribosyl)-5-[(5-phospho-beta-D-ribosylamino)methylideneamino]imidazole-4-carboxamide. It participates in amino-acid biosynthesis; L-histidine biosynthesis; L-histidine from 5-phospho-alpha-D-ribose 1-diphosphate: step 2/9. Its pathway is amino-acid biosynthesis; L-histidine biosynthesis; L-histidine from 5-phospho-alpha-D-ribose 1-diphosphate: step 3/9. The polypeptide is Histidine biosynthesis bifunctional protein HisIE (Staphylococcus epidermidis (strain ATCC 12228 / FDA PCI 1200)).